The primary structure comprises 1029 residues: Cilia- and flagella-associated protein 91 (1029 aa).

Disordered regions lie at residues 72–97 (NYRPAANDPNDTRQRSDALAVSGPNR) and 117–170 (PPSQ…PWEP). Positions 272 to 299 (LELLDNALQVREEELDDENRLRVEARKE) form a coiled coil. Residues 837–854 (ENQDQQEPQPQPQPSSSS) are compositionally biased toward low complexity. Disordered regions lie at residues 837–861 (ENQDQQEPQPQPQPSSSSGALDLAD) and 876–1029 (GEPS…EAAE). Acidic residues predominate over residues 890 to 910 (QQLEADAEAEAEAEAEAEAGA). Over residues 911–921 (EAEASAQAGAE) the composition is skewed to low complexity. Acidic residues predominate over residues 922–932 (AEAEAGVEAEA). A compositionally biased stretch (low complexity) spans 933-944 (EASAGAEASVGA). Acidic residues predominate over residues 964-982 (PEAEAEAEAGAEAEAENGA). Basic and acidic residues predominate over residues 984 to 999 (AEARLGGEEEGFREGE). Gly residues predominate over residues 1000-1015 (GQGGAAAGEAGPGGEL). Acidic residues predominate over residues 1016-1029 (AEGEGEAGEGEAAE).

The protein belongs to the CFAP91 family. As to quaternary structure, identified in a spoke-associated complex containing CFAP61, CFAP91 and CFAP251; the complex is associated with the radial spokes of the axoneme. The complex associates with Calmodulin; the association is calcium sensitive. Interacts with RSP3.

The protein localises to the cytoplasm. It localises to the cytoskeleton. Its subcellular location is the flagellum axoneme. In terms of biological role, as component of a spoke-associated complex, regulates flagellar dynein activity by mediating regulatory signals between the radial spokes and dynein arms. This is Cilia- and flagella-associated protein 91 from Chlamydomonas reinhardtii (Chlamydomonas smithii).